Here is a 562-residue protein sequence, read N- to C-terminus: Catalase T (562 aa).

Catalysis depends on residues His64 and Asn137. Position 351 (Tyr351) interacts with heme.

This sequence belongs to the catalase family. As to quaternary structure, homotetramer. Heme is required as a cofactor.

It is found in the cytoplasm. It carries out the reaction 2 H2O2 = O2 + 2 H2O. In terms of biological role, occurs in almost all aerobically respiring organisms and serves to protect cells from the toxic effects of hydrogen peroxide. This chain is Catalase T (CTT1), found in Saccharomyces cerevisiae (strain ATCC 204508 / S288c) (Baker's yeast).